The primary structure comprises 273 residues: WIMGHMVNAIGQIDEFVNLGANSIETDVSFDSSANPEYTYHGIPCDCGRNCKKWENFNDFLKGLRSATTPGNSKYKEKLVLVVFDLKTGSLYDNQANDAGKKLAKNLLQHYWNNGNNGGRAYIVLSIPDLNHYPLIKGFTDTLKQEGHPELLDKLGYDFSGNDAIGDVAKAYKKAGVSGHVWQSDGITNCLLRGLTRVKEAVANRDSGNGYINKVYYWTVDKRATTRDALDAGVDGIMTNYPDVITDVLNEAAYKSKFRVATYEDNPWETFKK.

H5 is a catalytic residue. Mg(2+)-binding residues include E25 and D27. The Nucleophile role is filled by H41. 2 disulfide bridges follow: C45/C51 and C47/C190. D85 contributes to the Mg(2+) binding site.

The protein belongs to the arthropod phospholipase D family. Class II subfamily. Requires Mg(2+) as cofactor. As to expression, expressed by the venom gland.

Its subcellular location is the secreted. The catalysed reaction is an N-(acyl)-sphingosylphosphocholine = an N-(acyl)-sphingosyl-1,3-cyclic phosphate + choline. It carries out the reaction an N-(acyl)-sphingosylphosphoethanolamine = an N-(acyl)-sphingosyl-1,3-cyclic phosphate + ethanolamine. The enzyme catalyses a 1-acyl-sn-glycero-3-phosphocholine = a 1-acyl-sn-glycero-2,3-cyclic phosphate + choline. It catalyses the reaction a 1-acyl-sn-glycero-3-phosphoethanolamine = a 1-acyl-sn-glycero-2,3-cyclic phosphate + ethanolamine. In terms of biological role, dermonecrotic toxins cleave the phosphodiester linkage between the phosphate and headgroup of certain phospholipids (sphingolipid and lysolipid substrates), forming an alcohol (often choline) and a cyclic phosphate. This toxin acts on sphingomyelin (SM). It may also act on ceramide phosphoethanolamine (CPE), lysophosphatidylcholine (LPC) and lysophosphatidylethanolamine (LPE), but not on lysophosphatidylserine (LPS), and lysophosphatidylglycerol (LPG). It acts by transphosphatidylation, releasing exclusively cyclic phosphate products as second products. Induces dermonecrosis, hemolysis, increased vascular permeability, edema, inflammatory response, and platelet aggregation. This is Dermonecrotic toxin LhSicTox-alphaIA1iii from Loxosceles hirsuta (Recluse spider).